A 79-amino-acid polypeptide reads, in one-letter code: Short neurotoxin 2 (79 aa).

The signal sequence occupies residues 1–21 (MKTLLLTLVMVTIMCLDLGYT). 4 disulfides stabilise this stretch: Cys-24/Cys-41, Cys-34/Cys-59, Cys-63/Cys-71, and Cys-72/Cys-77.

It belongs to the three-finger toxin family. Short-chain subfamily. Type III alpha-neurotoxin sub-subfamily. As to expression, expressed by the venom gland.

It localises to the secreted. Binds with high affinity to muscle nicotinic acetylcholine receptor (nAChR) and hinders acetylcholine binding to the receptor, thereby impairing neuromuscular transmission. Competes with the binding of alpha-bungarotoxin on muscle AChR (from Torpedo) with an IC(50) of 0.30 uM. Causes muscle paralysis, spasms and increased respiration. This chain is Short neurotoxin 2, found in Pseudonaja textilis (Eastern brown snake).